We begin with the raw amino-acid sequence, 354 residues long: tRNA N6-adenosine threonylcarbamoyltransferase (354 aa).

Fe cation-binding residues include H111 and H115. Substrate-binding positions include 134 to 138 (LVSGG), D167, G180, and N279. D319 contacts Fe cation.

This sequence belongs to the KAE1 / TsaD family. Fe(2+) is required as a cofactor.

The protein resides in the cytoplasm. The enzyme catalyses L-threonylcarbamoyladenylate + adenosine(37) in tRNA = N(6)-L-threonylcarbamoyladenosine(37) in tRNA + AMP + H(+). Functionally, required for the formation of a threonylcarbamoyl group on adenosine at position 37 (t(6)A37) in tRNAs that read codons beginning with adenine. Is involved in the transfer of the threonylcarbamoyl moiety of threonylcarbamoyl-AMP (TC-AMP) to the N6 group of A37, together with TsaE and TsaB. TsaD likely plays a direct catalytic role in this reaction. In Neisseria meningitidis, this protein is tRNA N6-adenosine threonylcarbamoyltransferase.